The following is a 475-amino-acid chain: MKHIVKNIHFVGIGGAGMSGIAEVLLNLGYKVSGSDVGSNAATRRLASLGATVMHGHDAANIAGANAVVVSTAVSGDNPEVLAARSKRIPVVPRAVMLAELMRLKQGVAIAGTHGKTTTTSLVASVLAEGGLDPTFVIGGRLNSAGANARLGTGDFIVAEADESDASFLNLFPVIEVITNIDADHMDTYGHDFARLKQAFIEFTQRLPFYGIAVLCVDDPNVREILPFVSKPVVRYGFAEDAQIRAVNARAVDGQMHFTVLRHLNGHAEPPLDVVLNLPGLHNVQNALAAIAIATELEVPDAAIVKALREFHGVGRRFQRYGEVATADGTGTFTLVDDYGHHPVEMAATLSAARGAFPGRRLVLAFQPHRFTRTRDCFEDFVKVLGTVDALLLAEVYAAGEAPIVAADGRALTRALRVAAKVEPVFVEQMEEMPQAIMNAARPGDVVVTMGAGSIGAVPGQVVSHQQPLQAGGAA.

112-118 lines the ATP pocket; the sequence is GTHGKTT.

This sequence belongs to the MurCDEF family.

The protein resides in the cytoplasm. The catalysed reaction is UDP-N-acetyl-alpha-D-muramate + L-alanine + ATP = UDP-N-acetyl-alpha-D-muramoyl-L-alanine + ADP + phosphate + H(+). The protein operates within cell wall biogenesis; peptidoglycan biosynthesis. Functionally, cell wall formation. The chain is UDP-N-acetylmuramate--L-alanine ligase from Cupriavidus pinatubonensis (strain JMP 134 / LMG 1197) (Cupriavidus necator (strain JMP 134)).